The sequence spans 107 residues: Flagellar transcriptional regulator FlhD (107 aa).

The protein belongs to the FlhD family. In terms of assembly, homodimer; disulfide-linked. Forms a heterohexamer composed of two FlhC and four FlhD subunits. Each FlhC binds a FlhD dimer, forming a heterotrimer, and a hexamer assembles by dimerization of two heterotrimers.

It is found in the cytoplasm. In terms of biological role, functions in complex with FlhC as a master transcriptional regulator that regulates transcription of several flagellar and non-flagellar operons by binding to their promoter region. Activates expression of class 2 flagellar genes, including fliA, which is a flagellum-specific sigma factor that turns on the class 3 genes. Also regulates genes whose products function in a variety of physiological pathways. The protein is Flagellar transcriptional regulator FlhD of Bordetella avium (strain 197N).